Reading from the N-terminus, the 324-residue chain is Protein FAM228B (324 aa).

Belongs to the FAM228 family.

The polypeptide is Protein FAM228B (FAM228B) (Homo sapiens (Human)).